The chain runs to 554 residues: Trichloroethene reductive dehalogenase (554 aa).

A signal peptide (tat-type signal) is located at residues 1 to 42; it reads MSEKYHSTVTRRDFMKRLGLAGAGAGALGAAVLAENNLPHEF. 4Fe-4S ferredoxin-type domains are found at residues 425–457 and 471–500; these read PTKP…HEGP and EGWH…NNSW. Residues cysteine 437, cysteine 440, cysteine 443, cysteine 447, cysteine 480, cysteine 483, cysteine 486, and cysteine 490 each contribute to the [4Fe-4S] cluster site.

The protein belongs to the PceA family. [4Fe-4S] cluster serves as cofactor. Requires corrinoid as cofactor. Predicted to be exported by the Tat system. The position of the signal peptide cleavage has been experimentally proven.

The protein resides in the cell membrane. It catalyses the reaction trichloroethene + AH2 = (Z)-1,2-dichloroethene + chloride + A + H(+). The catalysed reaction is (Z)-1,2-dichloroethene + AH2 = chloroethene + chloride + A + H(+). It carries out the reaction 1,1-dichloroethene + AH2 = chloroethene + chloride + A + H(+). Loses 93% of its activity upon incubation with 1-iodopropane and titanium(III) citrate in the dark. Subsequent exposure to light restores 80% of the original activity. Completely inhibited by 2 mM sodium sulfite or sodium dithionite, and by 1 mM cuprous chloride. Functionally, catalyzes the reductive dechlorination of trichloroethene (TCE) to cis-1,2-dichloroethene (DCE) and of cis-1,2-dichloroethene to chloroethene. The substrate specificity is broad, and the enzyme can dehalogenate various substrates, including 1,1-dichloroethene (1,1-DCE), 1,2-dichloroethane and 1,2-dibromoethane. A variety of other haloalkanes and haloalkenes containing three to five carbon atoms are dehalogenated at lower rates. Trans-1,2-dichloroethene (trans-DCE) and chloroethene are degraded at rates which are approximately 2 orders of magnitude lower. Titanium(III) citrate and methyl viologen can be used as reductants. The sequence is that of Trichloroethene reductive dehalogenase from Dehalococcoides mccartyi (strain ATCC BAA-2266 / KCTC 15142 / 195) (Dehalococcoides ethenogenes (strain 195)).